Reading from the N-terminus, the 314-residue chain is Hydroxyacyl-coenzyme A dehydrogenase, mitochondrial (314 aa).

A mitochondrion-targeting transit peptide spans 1–12 (MAFVTRQFLRSM). Residues 34–39 (GGGLMG) and Asp57 each bind NAD(+). Position 73 (Ser73) interacts with CoA. At Lys75 the chain carries N6-acetyllysine. A CoA-binding site is contributed by Lys80. At Lys80 the chain carries N6-succinyllysine. N6-acetyllysine; alternate is present on residues Lys81 and Lys87. 2 positions are modified to N6-succinyllysine; alternate: Lys81 and Lys87. Glu122 is a binding site for NAD(+). Residue Lys125 is modified to N6-acetyllysine. An NAD(+)-binding site is contributed by Lys127. Residue Lys127 is modified to N6-(2-hydroxyisobutyryl)lysine. Lys136 carries the N6-acetyllysine; alternate modification. N6-succinyllysine; alternate is present on Lys136. NAD(+) contacts are provided by Ser149 and Asn173. Ser149 serves as a coordination point for CoA. Lys179 bears the N6-acetyllysine mark. N6-acetyllysine; alternate occurs at positions 185, 192, and 202. N6-succinyllysine; alternate is present on residues Lys185, Lys192, and Lys202. Lys206 carries the post-translational modification N6-succinyllysine. N6-acetyllysine; alternate is present on residues Lys212 and Lys241. N6-succinyllysine; alternate occurs at positions 212 and 241. Lys305 lines the NAD(+) pocket. The residue at position 312 (Lys312) is an N6-acetyllysine; alternate. Lys312 is subject to N6-succinyllysine; alternate.

It belongs to the 3-hydroxyacyl-CoA dehydrogenase family. Homodimer. Interacts with GLUD1; this interaction inhibits the activation of glutamate dehydrogenase 1 (GLUD1). Succinylation at Lys-81, adjacent to a coenzyme A binding site. Desuccinylated by SIRT5. In terms of tissue distribution, expressed in liver, kidney, brain, and pancreatic islets.

It localises to the mitochondrion matrix. The protein localises to the nucleus. Its subcellular location is the cytoplasm. It is found in the cytosol. It catalyses the reaction a (3S)-3-hydroxyacyl-CoA + NAD(+) = a 3-oxoacyl-CoA + NADH + H(+). It carries out the reaction (3S)-3-hydroxybutanoyl-CoA + NAD(+) = acetoacetyl-CoA + NADH + H(+). The enzyme catalyses (3S)-hydroxydecanoyl-CoA + NAD(+) = 3-oxodecanoyl-CoA + NADH + H(+). The catalysed reaction is (3S)-hydroxyhexadecanoyl-CoA + NAD(+) = 3-oxohexadecanoyl-CoA + NADH + H(+). The protein operates within lipid metabolism; fatty acid beta-oxidation. Functionally, mitochondrial fatty acid beta-oxidation enzyme that catalyzes the third step of the beta-oxidation cycle for medium and short-chain 3-hydroxy fatty acyl-CoAs (C4 to C10). Plays a role in the control of insulin secretion by inhibiting the activation of glutamate dehydrogenase 1 (GLUD1), an enzyme that has an important role in regulating amino acid-induced insulin secretion. Plays a role in the maintenance of normal spermatogenesis through the reduction of fatty acid accumulation in the testes. In terms of biological role, inhibits cell proliferation. The chain is Hydroxyacyl-coenzyme A dehydrogenase, mitochondrial (Hadh) from Mus musculus (Mouse).